The primary structure comprises 1601 residues: MAELVRPKKPKHRERPQSDDAPRIPDRPVMVNGMRLPVAPSHSIQHQRDRSASPEPEEQVLSDTGESINPEKENGSIQDVRSSPVRPAPPPPRAISQEREAPPIPARNLVFPRSTSMVAESTREPTPVVLPKRSVAVAPYPTVPELAELPSYTAALKHPQVYPAVDGGQLHHSRSAAAIPEKTRFSAPVAQERVREGEAPPMYPSINTYERNEHGLMTEENLVTFYHNPLYEHAEIFVDQFIKAEVVPNQSGSLFPLLARLKSVCDLMTVSEVKGKENTEELQKCLRECWVQQTMSVEAKGKCGDNNDGTGRASYFSYELQQSVLDQMKRLLSTNRTNLLDHTLCEETSFRSLALQIQWQIIIINNNFMAENGLTTNCPPSLVATGPMTPGRTAIRTALSDIFYHLRYPRLSKRFIDTLFGWIKELTCILNMRQSCDDGIFLLCHLLRLPSPIDHWAPPFVQTFIQSQSPPRLKLDYCVALLTHLLNPIKARESFLRHVAQSEKEESTWEILADDDDGEANEFSFVTINESDLTAFLDQIPISELYSIAYLAFTSYSDKGSQFTAMIAFQLLLMKILDNGLTSYSQPGYKMFCKQIGISLKHSVRELCSNWRLIRDQIRPGEEQNLQKEVDRIVLLALNYLIHRDSVGLFQFVVALPYGVVSEECRSRCEYALRSNKKMSIHEIYETPICEVRARISSQSIAKRVSSLGAQDSEFLINSLASIGSYSNGDVGQLLKELIDVCFCEPATRDDFYKCGGEAIGQILTKRPETLHQLLAIVDRNLQHMDSYAINVLSSSRLFECRLTEPMISIIGKWLINNPPEHGANRLARRVLSGLHWGLGPDGQNLWIDVDVHAIAADTVVKAHSVHCSRSNSMISKSISKISKLASKVGDAESLFQQFCWDLLVKLKLPTIPVDLVQNDLTAHYVRIVQNYEDDVVVYLEKAVPLLSDLVSSGSSVASVVLLSRLIAQHYQKVNLMAADKNFMATFERLLHIDQLPYAVQWLSGPSSTPTPIVRLICSAISYYSAKLPPRDYLRAWITLLCQARTGWNEDAVTYQIVGTIARIAFINDTQKLYEITSIVFQAYQQQMAAEKNQSKGILALFSSDSSASPLIPDSMLAVSPFASYIMLRVEQKSFNPFYGHFYETLGKKDKYNLDHAAKKAASKCSMALPVERLAVFRWAKLVIVCKDSALLPIILQQLAGQAYRLRKANNLNLCYARRLIDEPQMQGVMAECRKAIEETTVATKGLSKAVVGWLFTKHEVTRTGFDFSVFDLDYLLQLILAGDKNMWMDFVNMPHFTSEEFAERKLYSVTCQLSPKNRESPSPPELGSPRARGTAKPFPVLPVHSGLPKAPCLDPSTIFQQHVVLQMAAPFMSTVKNLAKQYTECGDRMDIYDDAYCKLIRILYQSTQQTVPVEIRCSYCSKPKPCTMTVKPNVLSPEIDVKMSQNRQKRIEFWNELNASMIDQAAVATASMEHLSRLVSMMAAALDPRNRNSVQPTGHSLFYLITSSVGENELLFSVASESYSHSLRALGEEFVKFRPEEQMDVMQLALNGFVLSEPLVEVFTAEVLNSDDLCTAYRKLSDAVRMPERSKMALQLLGEQ.

Residues Met1 to Leu109 are disordered. The segment covering Arg15–Asp26 has biased composition (basic and acidic residues).

The protein belongs to the EPG5 family.

The protein localises to the cytoplasm. Involved in autophagy. Has a role in the degradation of protein aggregates within autophagosomes. Essential for starvation-induced autotrophy and omegasome development. The polypeptide is Ectopic P granules protein 5 (epg-5) (Caenorhabditis briggsae).